Consider the following 111-residue polypeptide: Phosphoribosyl-ATP pyrophosphatase (111 aa).

Belongs to the PRA-PH family.

Its subcellular location is the cytoplasm. The catalysed reaction is 1-(5-phospho-beta-D-ribosyl)-ATP + H2O = 1-(5-phospho-beta-D-ribosyl)-5'-AMP + diphosphate + H(+). The protein operates within amino-acid biosynthesis; L-histidine biosynthesis; L-histidine from 5-phospho-alpha-D-ribose 1-diphosphate: step 2/9. The protein is Phosphoribosyl-ATP pyrophosphatase of Pseudomonas entomophila (strain L48).